The sequence spans 72 residues: UPF0270 protein plu0398 (72 aa).

Belongs to the UPF0270 family.

In Photorhabdus laumondii subsp. laumondii (strain DSM 15139 / CIP 105565 / TT01) (Photorhabdus luminescens subsp. laumondii), this protein is UPF0270 protein plu0398.